A 500-amino-acid chain; its full sequence is Glutamate--tRNA ligase (500 aa).

Positions 12–22 match the 'HIGH' region motif; the sequence is PSPTGHLHIGN. Positions 259 to 263 match the 'KMSKS' region motif; it reads KLSKR. An ATP-binding site is contributed by lysine 262.

It belongs to the class-I aminoacyl-tRNA synthetase family. Glutamate--tRNA ligase type 1 subfamily. As to quaternary structure, monomer.

The protein localises to the cytoplasm. It carries out the reaction tRNA(Glu) + L-glutamate + ATP = L-glutamyl-tRNA(Glu) + AMP + diphosphate. Functionally, catalyzes the attachment of glutamate to tRNA(Glu) in a two-step reaction: glutamate is first activated by ATP to form Glu-AMP and then transferred to the acceptor end of tRNA(Glu). In Lactobacillus delbrueckii subsp. bulgaricus (strain ATCC BAA-365 / Lb-18), this protein is Glutamate--tRNA ligase.